A 2766-amino-acid polypeptide reads, in one-letter code: PDZ domain-containing protein 2 (2766 aa).

Positions 85–177 constitute a PDZ 1 domain; the sequence is LSFGNIPVFG…GGFIYLIMLR (93 aa). Disordered stretches follow at residues 189 to 315 and 419 to 452; these read GNSG…KTGK and MPGS…KLKS. Positions 242–254 are enriched in acidic residues; sequence TADDPNSELENGA. Positions 280-296 are enriched in basic and acidic residues; the sequence is HLERSEADSEVELRVPK. The 86-residue stretch at 334–419 folds into the PDZ 2 domain; it reads KMELLKESDG…MVQLVVASKM (86 aa). Phosphoserine is present on serine 517. Residues 535–621 enclose the PDZ 3 domain; it reads IIGLYKEKGK…GLFVLTVRTK (87 aa). Residues 627-636 are compositionally biased toward polar residues; sequence LTPCSTPTHM. Residues 627-673 are disordered; it reads LTPCSTPTHMSRSSSPSFNTNSGGTPAGGGQEEGGSSSLGRKAPGPK. A compositionally biased stretch (low complexity) spans 637–650; the sequence is SRSSSPSFNTNSGG. The region spanning 679-764 is the PDZ 4 domain; it reads EVTLNKEPRV…GPVRLVIGRH (86 aa). A compositionally biased stretch (polar residues) spans 783 to 794; it reads YQESREANSSPG. 2 disordered regions span residues 783–803 and 834–853; these read YQES…KSPS and AGSE…EDGS. Residues serine 891 and serine 895 each carry the phosphoserine modification. 10 disordered regions span residues 915-966, 990-1425, 1456-1531, 1725-1909, 1924-1967, 2015-2070, 2146-2174, 2262-2397, 2424-2450, and 2465-2496; these read NGGS…KQEE, HSIL…PSVL, ISLS…CPGT, DSQG…LPEQ, DTSC…IRQS, ERVP…ASQV, FSSH…AMGG, DRPT…ERRT, QLEI…GHAD, and TRAY…WATP. Residues 918–927 show a composition bias toward acidic residues; that stretch reads SDDEDFDGEG. The span at 1021–1038 shows a compositional bias: basic and acidic residues; that stretch reads GRKEMSGSRSSPKLEYRV. Polar residues-rich tracts occupy residues 1040–1061, 1126–1137, and 1189–1220; these read TDTQ…SENL, PGDSSVPTNCGP, and SETP…SQGI. 2 stretches are compositionally biased toward low complexity: residues 1379 to 1393 and 1456 to 1471; these read SQPP…SHHA and ISLS…SPSS. A Phosphoserine modification is found at serine 1767. Basic residues predominate over residues 1797–1806; it reads CSPKLKRLNS. Positions 1884–1901 are enriched in polar residues; that stretch reads LRTSASDTSIRTFTSPLT. Composition is skewed to low complexity over residues 1924–1937 and 1947–1963; these read DTSC…PRSG and SGSA…ALAG. Low complexity-rich tracts occupy residues 2280 to 2296 and 2305 to 2321; these read PPIN…GSPS and RSLS…SSLL. Polar residues-rich tracts occupy residues 2322-2347 and 2362-2372; these read PQMT…SNKG and PTSTVSPASPS. The PDZ 5 domain occupies 2550–2634; that stretch reads FIVLNKKEGS…HKHALMIIKK (85 aa). The tract at residues 2635 to 2667 is disordered; that stretch reads GNDQPGPSFKQEPPSANGKGPFPRRTLPLEPGA. Positions 2678–2763 constitute a PDZ 6 domain; that stretch reads CVEVLKTSAG…GPVQLVIRKH (86 aa).

As to quaternary structure, interacts with SCN10A, CTNND2 and PKP4. A secreted form is produced by caspase-mediated proteolytic cleavage. Expressed in the heart, liver, brain, spleen, lung, kidney, testis and skeletal muscle.

Its subcellular location is the nucleus. It is found in the cytoplasm. It localises to the endoplasmic reticulum. The protein resides in the cell junction. The protein localises to the secreted. The sequence is that of PDZ domain-containing protein 2 (Pdzd2) from Rattus norvegicus (Rat).